We begin with the raw amino-acid sequence, 147 residues long: Acidic phospholipase A2 S9-53F (147 aa).

An N-terminal signal peptide occupies residues 1-19; the sequence is MYPAHLLVLLAVCVSLLGA. A propeptide spanning residues 20-27 is cleaved from the precursor; the sequence is SDIPPQPL. 7 cysteine pairs are disulfide-bonded: Cys-38/Cys-99, Cys-54/Cys-146, Cys-56/Cys-72, Cys-71/Cys-127, Cys-78/Cys-120, Cys-88/Cys-113, and Cys-106/Cys-118. Ca(2+) contacts are provided by Tyr-55, Gly-57, and Gly-59. His-75 is a catalytic residue. Asp-76 provides a ligand contact to Ca(2+). Asp-121 is a catalytic residue.

Belongs to the phospholipase A2 family. Group I subfamily. D49 sub-subfamily. Ca(2+) is required as a cofactor. As to expression, expressed by the venom gland.

The protein localises to the secreted. The catalysed reaction is a 1,2-diacyl-sn-glycero-3-phosphocholine + H2O = a 1-acyl-sn-glycero-3-phosphocholine + a fatty acid + H(+). Snake venom phospholipase A2 (PLA2) that inhibits collagen-induced platelet aggregation. PLA2 catalyzes the calcium-dependent hydrolysis of the 2-acyl groups in 3-sn-phosphoglycerides. This is Acidic phospholipase A2 S9-53F from Austrelaps superbus (Lowland copperhead snake).